A 385-amino-acid chain; its full sequence is Methionine aminopeptidase 1 (385 aa).

Residues 6 to 59 form a C6H2-type zinc finger; the sequence is TRVCETAGCSSEAKLQCPTCLKLGIQGSYFCSQECFKGSWATHKLLHKKAKDEK. Residues C9, C14, C22, C25, C36, C40, H48, and H52 each coordinate Zn(2+). An a protein-binding site is contributed by H203. Zn(2+) contacts are provided by D220, D231, and H294. An a protein-binding site is contributed by H301. Residues E327 and E358 each coordinate Zn(2+).

Belongs to the peptidase M24A family. Methionine aminopeptidase type 1 subfamily. In terms of assembly, associates with the 60S ribosomal subunit of the 80S translational complex. It depends on Zn(2+) as a cofactor. Requires Co(2+) as cofactor. Mn(2+) is required as a cofactor. Fe(2+) serves as cofactor.

It is found in the cytoplasm. The catalysed reaction is Release of N-terminal amino acids, preferentially methionine, from peptides and arylamides.. Its function is as follows. Cotranslationally removes the N-terminal methionine from nascent proteins. The N-terminal methionine is often cleaved when the second residue in the primary sequence is small and uncharged (Met-Ala-, Cys, Gly, Pro, Ser, Thr, or Val). The chain is Methionine aminopeptidase 1 (METAP1) from Gallus gallus (Chicken).